We begin with the raw amino-acid sequence, 321 residues long: MKQQAGIGILLALTTAICWGALPIAMKQVLEVMEPPTIVFYRFLMASIGLGAILAVKKRLPPLRVFRKPRWLILLAVATAGLFGNFILFSSSLQYLSPTASQVIGQLSPVGMMVASVFILKEKMRSTQVVGALMLLSGLVMFFNTSLVEIFTKLTDYTWGVIFGVGAATVWVSYGVAQKVLLRRLASPQILFLLYTLCTIALFPLAKPGVIAQLSHWQLACLIFCGLNTLVGYGALAEAMARWQAAQVSAIITLTPLFTLFFSDLLSLAWPDFFARPMLNLLGYLGAFVVVAGAMYSAIGHRIWGGLRKHTTVVSQPRAGE.

Residues 1-5 are Cytoplasmic-facing; the sequence is MKQQA. Residues 6 to 26 form a helical membrane-spanning segment; sequence GIGILLALTTAICWGALPIAM. The EamA 1 domain maps to 17-144; sequence ICWGALPIAM…LLSGLVMFFN (128 aa). The Periplasmic segment spans residues 27–35; sequence KQVLEVMEP. A helical transmembrane segment spans residues 36–56; sequence PTIVFYRFLMASIGLGAILAV. Topologically, residues 57–70 are cytoplasmic; the sequence is KKRLPPLRVFRKPR. Residues 71 to 91 traverse the membrane as a helical segment; it reads WLILLAVATAGLFGNFILFSS. Topologically, residues 92–99 are periplasmic; it reads SLQYLSPT. The chain crosses the membrane as a helical span at residues 100–120; that stretch reads ASQVIGQLSPVGMMVASVFIL. Residues 121–130 lie on the Cytoplasmic side of the membrane; that stretch reads KEKMRSTQVV. The chain crosses the membrane as a helical span at residues 131 to 151; sequence GALMLLSGLVMFFNTSLVEIF. Residues 152-156 are Periplasmic-facing; the sequence is TKLTD. Residues 157–177 traverse the membrane as a helical segment; sequence YTWGVIFGVGAATVWVSYGVA. In terms of domain architecture, EamA 2 spans 169–292; the sequence is TVWVSYGVAQ…GYLGAFVVVA (124 aa). Residues 178–190 are Cytoplasmic-facing; that stretch reads QKVLLRRLASPQI. The helical transmembrane segment at 191–211 threads the bilayer; the sequence is LFLLYTLCTIALFPLAKPGVI. Topologically, residues 212 to 216 are periplasmic; that stretch reads AQLSH. The chain crosses the membrane as a helical span at residues 217 to 237; the sequence is WQLACLIFCGLNTLVGYGALA. The Cytoplasmic segment spans residues 238-249; sequence EAMARWQAAQVS. Residues 250-270 traverse the membrane as a helical segment; the sequence is AIITLTPLFTLFFSDLLSLAW. Residues 271–278 are Periplasmic-facing; the sequence is PDFFARPM. A helical membrane pass occupies residues 279–299; it reads LNLLGYLGAFVVVAGAMYSAI. The Cytoplasmic portion of the chain corresponds to 300-321; that stretch reads GHRIWGGLRKHTTVVSQPRAGE.

This sequence belongs to the EamA transporter family.

The protein resides in the cell inner membrane. This is an uncharacterized protein from Escherichia coli O157:H7.